Consider the following 316-residue polypeptide: Replication initiation protein (316 aa).

The protein belongs to the initiator RepB protein family.

This is Replication initiation protein (repA) from Escherichia coli.